The primary structure comprises 253 residues: 5'-nucleotidase SurE (253 aa).

A divalent metal cation contacts are provided by D8, D9, S39, and N92.

The protein belongs to the SurE nucleotidase family. A divalent metal cation is required as a cofactor.

It localises to the cytoplasm. The enzyme catalyses a ribonucleoside 5'-phosphate + H2O = a ribonucleoside + phosphate. Nucleotidase that shows phosphatase activity on nucleoside 5'-monophosphates. This is 5'-nucleotidase SurE from Burkholderia vietnamiensis (strain G4 / LMG 22486) (Burkholderia cepacia (strain R1808)).